The chain runs to 627 residues: Coiled-coil domain-containing protein 22 (627 aa).

The interval 1–321 (MEEADRILIH…VADVPATSQR (321 aa)) is sufficient for interaction with COMMD1. The interval 1–447 (MEEADRILIH…LQDCRELESS (447 aa)) is sufficicient and required for interaction with CCDC93. A Phosphoserine modification is found at Ser410. Residues 448–535 (RRLAEIQELH…NSLSGKLDRT (88 aa)) adopt a coiled-coil conformation.

It belongs to the CCDC22 family. In terms of assembly, component of the commander complex consisting of the CCC subcomplex and the retriever subcomplex. Component of the CCC (COMMD/CCDC22/CCDC93) subcomplex consisting of COMMD1, COMMD2, COMMD3, COMMD4, COMMD5, COMMD6, COMMD7, COMMD8, COMMD9, COMMD10, CCDC22 and CCDC93. Forms a coiled-coil heterodimer with CCDC22; this heterodimer interacts with the guanine nucleotide exchange factor DENND10; the interaction is direct. Interacts with CUL1, CUL2, CUL3, SKP1, BTRC. Interacts with SNX17 and SNX31. Interacts with CPNE1 and CPNE4.

The protein localises to the endosome. It localises to the cytoplasm. Its subcellular location is the cytoskeleton. The protein resides in the microtubule organizing center. It is found in the centrosome. Functionally, component of the commander complex that is essential for endosomal recycling of transmembrane cargos; the Commander complex is composed of composed of the CCC subcomplex and the retriever subcomplex. Component of the CCC complex, which is involved in the regulation of endosomal recycling of surface proteins, including integrins, signaling receptor and channels. Involved in regulation of NF-kappa-B signaling. Promotes ubiquitination of I-kappa-B-kinase subunit IKBKB and its subsequent proteasomal degradation leading to NF-kappa-B activation; the function may involve association with COMMD8 and a CUL1-dependent E3 ubiquitin ligase complex. May down-regulate NF-kappa-B activity via association with COMMD1 and involving a CUL2-dependent E3 ubiquitin ligase complex. Regulates the cellular localization of COMM domain-containing proteins, such as COMMD1 and COMMD10. Component of the CCC complex, which is involved in the regulation of endosomal recycling of surface proteins, including integrins, signaling receptor and channels. The CCC complex associates with SNX17, retriever and WASH complexes to prevent lysosomal degradation and promote cell surface recycling of numerous cargos such as integrins ITGA5:ITGB1. Plays a role in copper ion homeostasis. Involved in copper-dependent ATP7A trafficking between the trans-Golgi network and vesicles in the cell periphery; the function is proposed to depend on its association within the CCC complex and cooperation with the WASH complex on early endosomes. This chain is Coiled-coil domain-containing protein 22 (Ccdc22), found in Mus musculus (Mouse).